A 196-amino-acid chain; its full sequence is Imidazoleglycerol-phosphate dehydratase (196 aa).

It belongs to the imidazoleglycerol-phosphate dehydratase family.

The protein localises to the cytoplasm. It carries out the reaction D-erythro-1-(imidazol-4-yl)glycerol 3-phosphate = 3-(imidazol-4-yl)-2-oxopropyl phosphate + H2O. Its pathway is amino-acid biosynthesis; L-histidine biosynthesis; L-histidine from 5-phospho-alpha-D-ribose 1-diphosphate: step 6/9. This Granulibacter bethesdensis (strain ATCC BAA-1260 / CGDNIH1) protein is Imidazoleglycerol-phosphate dehydratase.